The chain runs to 68 residues: Large ribosomal subunit protein bL31 (68 aa).

C16, C18, C38, and C41 together coordinate Zn(2+).

It belongs to the bacterial ribosomal protein bL31 family. Type A subfamily. In terms of assembly, part of the 50S ribosomal subunit. Requires Zn(2+) as cofactor.

Binds the 23S rRNA. The sequence is that of Large ribosomal subunit protein bL31 from Thiobacillus denitrificans (strain ATCC 25259 / T1).